The following is a 290-amino-acid chain: Appressoria-specific virulence factor GAS2 (290 aa).

The signal sequence occupies residues 1–19 (MKYTSAILISAFAATNVFA). Asn99 carries an N-linked (GlcNAc...) asparagine glycan. A disordered region spans residues 121-140 (LPRAGGGTSTPKGTEETGVK).

The protein resides in the cytoplasm. Its function is as follows. Appressoria-specific virulence factor required for appressorial penetration in host and lesion development. The chain is Appressoria-specific virulence factor GAS2 from Pyricularia oryzae (strain 70-15 / ATCC MYA-4617 / FGSC 8958) (Rice blast fungus).